Here is a 575-residue protein sequence, read N- to C-terminus: Chaperonin CPN60-1, mitochondrial (575 aa).

The N-terminal 32 residues, 1–32, are a transit peptide targeting the mitochondrion; sequence MHRFATGLASKARLARNGANQIASRSNWRRNY.

Belongs to the chaperonin (HSP60) family.

It localises to the mitochondrion. In terms of biological role, implicated in mitochondrial protein import and macromolecular assembly. May facilitate the correct folding of imported proteins. May also prevent misfolding and promote the refolding and proper assembly of unfolded polypeptides generated under stress conditions in the mitochondrial matrix. The chain is Chaperonin CPN60-1, mitochondrial (CPN60-1) from Cucurbita maxima (Pumpkin).